Reading from the N-terminus, the 395-residue chain is Nucleoside diphosphate kinase homolog 7 (395 aa).

The region spanning 22-110 (QSERFAFIAE…YTARQLGSRK (89 aa)) is the DM10 domain.

The protein belongs to the NDK family. As to quaternary structure, component of sperm flagellar doublet microtubules. Component of the gamma-tubulin ring complex.

It localises to the cytoplasm. Its subcellular location is the cytoskeleton. It is found in the microtubule organizing center. The protein resides in the centrosome. The protein localises to the nucleus. It localises to the spindle. Its subcellular location is the cilium axoneme. It is found in the flagellum axoneme. The protein resides in the cell projection. The protein localises to the cilium. In terms of biological role, possesses an intrinsic kinase activity. Displays 3'-5' exonuclease activity with a preference for single-stranded DNA. Does not seem to have nucleoside diphosphate kinase activity. Functional component of the gamma-tubulin ring complex, implicated in the regulation of the microtubule-nucleating activity of the gamma-tubulin ring complex in centrosomes, in a kinase activity-dependent manner. Part of the dynein-decorated doublet microtubules (DMTs) in cilia axoneme, which is required for motile cilia beating. In Mus musculus (Mouse), this protein is Nucleoside diphosphate kinase homolog 7.